The following is a 392-amino-acid chain: Sulfate adenylyltransferase (392 aa).

It belongs to the sulfate adenylyltransferase family.

The catalysed reaction is sulfate + ATP + H(+) = adenosine 5'-phosphosulfate + diphosphate. The protein operates within sulfur metabolism; hydrogen sulfide biosynthesis; sulfite from sulfate: step 1/3. This Trichormus variabilis (strain ATCC 29413 / PCC 7937) (Anabaena variabilis) protein is Sulfate adenylyltransferase.